An 828-amino-acid chain; its full sequence is Translation initiation factor IF-2 (828 aa).

Disordered regions lie at residues 48-76 (SYSG…SEEF) and 112-137 (ASQE…EPKI). Over residues 49-58 (YSGSTTTLSL) the composition is skewed to polar residues. A compositionally biased stretch (low complexity) spans 65–74 (LETGSSSGSE). Residues 116 to 126 (DPIEVEQEESS) are compositionally biased toward acidic residues. Positions 127 to 137 (DTNKVKEEPKI) are enriched in basic and acidic residues. The tr-type G domain maps to 326–496 (SRAPVVTVMG…LLIAEMQNLK (171 aa)). The G1 stretch occupies residues 335 to 342 (GHVDHGKT). Residue 335 to 342 (GHVDHGKT) coordinates GTP. The G2 stretch occupies residues 360–364 (GITQH). Residues 382 to 385 (DTPG) are G3. GTP contacts are provided by residues 382–386 (DTPGH) and 436–439 (NKID). Positions 436–439 (NKID) are G4. Positions 472–474 (SAL) are G5.

The protein belongs to the TRAFAC class translation factor GTPase superfamily. Classic translation factor GTPase family. IF-2 subfamily.

The protein localises to the cytoplasm. Its function is as follows. One of the essential components for the initiation of protein synthesis. Protects formylmethionyl-tRNA from spontaneous hydrolysis and promotes its binding to the 30S ribosomal subunits. Also involved in the hydrolysis of GTP during the formation of the 70S ribosomal complex. The sequence is that of Translation initiation factor IF-2 from Rickettsia bellii (strain RML369-C).